We begin with the raw amino-acid sequence, 294 residues long: Golgi to ER traffic protein 2 (294 aa).

The tract at residues 1-104 is disordered; it reads MSSELSETEK…QATSPQETID (104 aa). The Cytoplasmic portion of the chain corresponds to 1–166; it reads MSSELSETEK…LDYNNYLINN (166 aa). The segment covering 12–21 has biased composition (basic residues); it reads KLIRERRQKK. Residues 34–65 show a composition bias toward polar residues; that stretch reads ITGQAENSQLDTESPLDSKSSRETTPTVTKVD. Over residues 85 to 95 the composition is skewed to basic and acidic residues; it reads KVEKSQKKKEQ. A helical transmembrane segment spans residues 167-187; the sequence is LKVWSIIFKWCFFLIPYLFAL. Over 188-205 the chain is Lumenal; the sequence is TRSEPISFLPEQFSNPSN. The helical transmembrane segment at 206–225 threads the bilayer; the sequence is FFMIFLSFEIVATSIYFQKL. The Cytoplasmic segment spans residues 226-272; sequence QNIEKSNKINGFQSNNKIVNLVSLIPEGVLPVPDIKGKVIMALQYWD. A helical membrane pass occupies residues 273 to 293; the sequence is VFSMFLTDICFVLVMMGLFKL. Residue Ile-294 is a topological domain, lumenal.

It belongs to the GET2 family. Component of the Golgi to ER traffic (GET) complex, which is composed of GET1, GET2 and GET3. Within the complex, GET1 and GET2 form a heterotetramer which is stabilized by phosphatidylinositol binding and which binds to the GET3 homodimer.

The protein resides in the endoplasmic reticulum membrane. It localises to the golgi apparatus membrane. Functionally, required for the post-translational delivery of tail-anchored (TA) proteins to the endoplasmic reticulum. Together with GET1, acts as a membrane receptor for soluble GET3, which recognizes and selectively binds the transmembrane domain of TA proteins in the cytosol. The GET complex cooperates with the HDEL receptor ERD2 to mediate the ATP-dependent retrieval of resident ER proteins that contain a C-terminal H-D-E-L retention signal from the Golgi to the ER. In Vanderwaltozyma polyspora (strain ATCC 22028 / DSM 70294 / BCRC 21397 / CBS 2163 / NBRC 10782 / NRRL Y-8283 / UCD 57-17) (Kluyveromyces polysporus), this protein is Golgi to ER traffic protein 2.